The primary structure comprises 35 residues: Photosystem II reaction center protein T (35 aa).

Residues 3–23 (ALVYTFLLVSTLGIIFFAIFF) traverse the membrane as a helical segment.

This sequence belongs to the PsbT family. As to quaternary structure, PSII is composed of 1 copy each of membrane proteins PsbA, PsbB, PsbC, PsbD, PsbE, PsbF, PsbH, PsbI, PsbJ, PsbK, PsbL, PsbM, PsbT, PsbY, PsbZ, Psb30/Ycf12, at least 3 peripheral proteins of the oxygen-evolving complex and a large number of cofactors. It forms dimeric complexes.

It is found in the plastid. The protein localises to the chloroplast thylakoid membrane. Found at the monomer-monomer interface of the photosystem II (PS II) dimer, plays a role in assembly and dimerization of PSII. PSII is a light-driven water plastoquinone oxidoreductase, using light energy to abstract electrons from H(2)O, generating a proton gradient subsequently used for ATP formation. The sequence is that of Photosystem II reaction center protein T from Ginkgo biloba (Ginkgo).